A 99-amino-acid polypeptide reads, in one-letter code: Protein translation factor SUI1 homolog (99 aa).

Belongs to the SUI1 family.

This is Protein translation factor SUI1 homolog from Pyrococcus horikoshii (strain ATCC 700860 / DSM 12428 / JCM 9974 / NBRC 100139 / OT-3).